The chain runs to 216 residues: Probable transaldolase (216 aa).

Lysine 83 functions as the Schiff-base intermediate with substrate in the catalytic mechanism.

Belongs to the transaldolase family. Type 3B subfamily.

It is found in the cytoplasm. The catalysed reaction is D-sedoheptulose 7-phosphate + D-glyceraldehyde 3-phosphate = D-erythrose 4-phosphate + beta-D-fructose 6-phosphate. It participates in carbohydrate degradation; pentose phosphate pathway; D-glyceraldehyde 3-phosphate and beta-D-fructose 6-phosphate from D-ribose 5-phosphate and D-xylulose 5-phosphate (non-oxidative stage): step 2/3. Transaldolase is important for the balance of metabolites in the pentose-phosphate pathway. In Hyphomonas neptunium (strain ATCC 15444), this protein is Probable transaldolase.